Reading from the N-terminus, the 185-residue chain is Elongation factor P (185 aa).

The protein belongs to the elongation factor P family.

It localises to the cytoplasm. It participates in protein biosynthesis; polypeptide chain elongation. Involved in peptide bond synthesis. Stimulates efficient translation and peptide-bond synthesis on native or reconstituted 70S ribosomes in vitro. Probably functions indirectly by altering the affinity of the ribosome for aminoacyl-tRNA, thus increasing their reactivity as acceptors for peptidyl transferase. The polypeptide is Elongation factor P (Alkaliphilus oremlandii (strain OhILAs) (Clostridium oremlandii (strain OhILAs))).